The sequence spans 113 residues: Colipase (113 aa).

The signal sequence occupies residues 1–18; it reads MEKVLVLLLVSLLAVAYA. The propeptide at 19–23 is enterostatin, activation peptide; the sequence is APGPR. 5 disulfide bridges follow: Cys35–Cys46, Cys41–Cys57, Cys45–Cys79, Cys67–Cys87, and Cys81–Cys105.

The protein belongs to the colipase family. Forms a 1:1 stoichiometric complex with pancreatic lipase. Expressed by the pancreas.

The protein localises to the secreted. Its function is as follows. Colipase is a cofactor of pancreatic lipase. It allows the lipase to anchor itself to the lipid-water interface. Without colipase the enzyme is washed off by bile salts, which have an inhibitory effect on the lipase. Enterostatin has a biological activity as a satiety signal. This chain is Colipase, found in Mus musculus (Mouse).